The primary structure comprises 577 residues: Jasmonoyl--L-amino acid synthetase JAR4 (577 aa).

Ser-99 contacts ATP. Ser-102 is a binding site for jasmonate. ATP contacts are provided by residues Met-119, Thr-122, Gly-163, Asn-168, and 331-336 (GSSEGW). 166-170 (TTNVY) serves as a coordination point for an L-alpha-amino acid. 328 to 331 (ADYG) serves as a coordination point for jasmonate. 531 to 535 (KILDH) serves as a coordination point for an L-alpha-amino acid.

The protein belongs to the IAA-amido conjugating enzyme family.

The enzyme catalyses a jasmonate + an L-alpha-amino acid + ATP = a jasmonyl-L-amino acid + AMP + diphosphate + H(+). Functionally, catalyzes the synthesis of jasmonate-amino acid conjugates by adenylation. Catalyzes the conjugation of jasmonate (JA) to Ile, Leu and Val. Catalyzes the conjugation of jasmonate (JA) to Ile to mediate defense signaling and resistance to the herbivore Manduca sexta caterpillars. This is Jasmonoyl--L-amino acid synthetase JAR4 from Nicotiana attenuata (Coyote tobacco).